The following is a 572-amino-acid chain: uncharacterized protein (572 aa).

The tract at residues 543–572 (AYKKSSNTNSTTNSMNPRRSTVSSEDWVLN) is disordered. A compositionally biased stretch (low complexity) spans 547 to 563 (SSNTNSTTNSMNPRRST).

This is an uncharacterized protein from Acanthamoeba polyphaga (Amoeba).